We begin with the raw amino-acid sequence, 1042 residues long: Carbamoyl phosphate synthase large chain (1042 aa).

Residues Met-1–Glu-417 form a carboxyphosphate synthetic domain region. ATP contacts are provided by Arg-127, Arg-182, Gly-188, Gly-189, Glu-221, Ile-223, Glu-228, Gly-254, Ile-255, His-256, Gln-297, and Glu-314. Residues Arg-131–Leu-343 enclose the ATP-grasp 1 domain. Mg(2+)-binding residues include Gln-297, Glu-314, and Asn-316. Residues Gln-297, Glu-314, and Asn-316 each contribute to the Mn(2+) site. The interval Tyr-418–Arg-558 is oligomerization domain. Residues Ala-559–Ala-947 are carbamoyl phosphate synthetic domain. The 192-residue stretch at Asn-689–Ala-880 folds into the ATP-grasp 2 domain. ATP is bound by residues Arg-725, Glu-764, Leu-766, Glu-771, Gly-796, Val-797, His-798, Ser-799, Gln-839, and Glu-851. Positions 839, 851, and 853 each coordinate Mg(2+). Mn(2+)-binding residues include Gln-839, Glu-851, and Asn-853. In terms of domain architecture, MGS-like spans Ala-947–Gly-1042. The allosteric domain stretch occupies residues Pro-948–Gly-1042.

It belongs to the CarB family. Composed of two chains; the small (or glutamine) chain promotes the hydrolysis of glutamine to ammonia, which is used by the large (or ammonia) chain to synthesize carbamoyl phosphate. Tetramer of heterodimers (alpha,beta)4. It depends on Mg(2+) as a cofactor. The cofactor is Mn(2+).

It catalyses the reaction hydrogencarbonate + L-glutamine + 2 ATP + H2O = carbamoyl phosphate + L-glutamate + 2 ADP + phosphate + 2 H(+). It carries out the reaction hydrogencarbonate + NH4(+) + 2 ATP = carbamoyl phosphate + 2 ADP + phosphate + 2 H(+). It participates in amino-acid biosynthesis; L-arginine biosynthesis; carbamoyl phosphate from bicarbonate: step 1/1. Its pathway is pyrimidine metabolism; UMP biosynthesis via de novo pathway; (S)-dihydroorotate from bicarbonate: step 1/3. Its function is as follows. Large subunit of the glutamine-dependent carbamoyl phosphate synthetase (CPSase). CPSase catalyzes the formation of carbamoyl phosphate from the ammonia moiety of glutamine, carbonate, and phosphate donated by ATP, constituting the first step of 2 biosynthetic pathways, one leading to arginine and/or urea and the other to pyrimidine nucleotides. The large subunit (synthetase) binds the substrates ammonia (free or transferred from glutamine from the small subunit), hydrogencarbonate and ATP and carries out an ATP-coupled ligase reaction, activating hydrogencarbonate by forming carboxy phosphate which reacts with ammonia to form carbamoyl phosphate. The chain is Carbamoyl phosphate synthase large chain from Halobacterium salinarum (strain ATCC 700922 / JCM 11081 / NRC-1) (Halobacterium halobium).